A 597-amino-acid polypeptide reads, in one-letter code: Arginine--tRNA ligase (597 aa).

The short motif at 124–134 (PNVAKPLHVGH) is the 'HIGH' region element.

Belongs to the class-I aminoacyl-tRNA synthetase family. Monomer.

Its subcellular location is the cytoplasm. The enzyme catalyses tRNA(Arg) + L-arginine + ATP = L-arginyl-tRNA(Arg) + AMP + diphosphate. In Agathobacter rectalis (strain ATCC 33656 / DSM 3377 / JCM 17463 / KCTC 5835 / VPI 0990) (Eubacterium rectale), this protein is Arginine--tRNA ligase.